The sequence spans 339 residues: Glucokinase (339 aa).

16-21 (GDIGGT) is a binding site for ATP.

Belongs to the bacterial glucokinase family.

The protein resides in the cytoplasm. It catalyses the reaction D-glucose + ATP = D-glucose 6-phosphate + ADP + H(+). This chain is Glucokinase, found in Rhizobium meliloti (strain 1021) (Ensifer meliloti).